Reading from the N-terminus, the 207-residue chain is Thiamine-phosphate synthase (207 aa).

4-amino-2-methyl-5-(diphosphooxymethyl)pyrimidine contacts are provided by residues 36-40 (QLRIK) and Asp68. 2 residues coordinate Mg(2+): Asp69 and Asp88. Ser106 provides a ligand contact to 4-amino-2-methyl-5-(diphosphooxymethyl)pyrimidine. 132-134 (TQT) contributes to the 2-[(2R,5Z)-2-carboxy-4-methylthiazol-5(2H)-ylidene]ethyl phosphate binding site. Lys135 contacts 4-amino-2-methyl-5-(diphosphooxymethyl)pyrimidine. Residues Gly162 and 182–183 (VS) contribute to the 2-[(2R,5Z)-2-carboxy-4-methylthiazol-5(2H)-ylidene]ethyl phosphate site.

The protein belongs to the thiamine-phosphate synthase family. It depends on Mg(2+) as a cofactor.

The catalysed reaction is 2-[(2R,5Z)-2-carboxy-4-methylthiazol-5(2H)-ylidene]ethyl phosphate + 4-amino-2-methyl-5-(diphosphooxymethyl)pyrimidine + 2 H(+) = thiamine phosphate + CO2 + diphosphate. The enzyme catalyses 2-(2-carboxy-4-methylthiazol-5-yl)ethyl phosphate + 4-amino-2-methyl-5-(diphosphooxymethyl)pyrimidine + 2 H(+) = thiamine phosphate + CO2 + diphosphate. It carries out the reaction 4-methyl-5-(2-phosphooxyethyl)-thiazole + 4-amino-2-methyl-5-(diphosphooxymethyl)pyrimidine + H(+) = thiamine phosphate + diphosphate. It functions in the pathway cofactor biosynthesis; thiamine diphosphate biosynthesis; thiamine phosphate from 4-amino-2-methyl-5-diphosphomethylpyrimidine and 4-methyl-5-(2-phosphoethyl)-thiazole: step 1/1. Functionally, condenses 4-methyl-5-(beta-hydroxyethyl)thiazole monophosphate (THZ-P) and 2-methyl-4-amino-5-hydroxymethyl pyrimidine pyrophosphate (HMP-PP) to form thiamine monophosphate (TMP). In Pyrococcus horikoshii (strain ATCC 700860 / DSM 12428 / JCM 9974 / NBRC 100139 / OT-3), this protein is Thiamine-phosphate synthase.